We begin with the raw amino-acid sequence, 206 residues long: Ribosomal RNA large subunit methyltransferase E (206 aa).

S-adenosyl-L-methionine is bound by residues Gly-60, Trp-62, Asp-80, Asp-96, and Asp-121. Lys-161 (proton acceptor) is an active-site residue.

Belongs to the class I-like SAM-binding methyltransferase superfamily. RNA methyltransferase RlmE family.

The protein resides in the cytoplasm. The catalysed reaction is uridine(2552) in 23S rRNA + S-adenosyl-L-methionine = 2'-O-methyluridine(2552) in 23S rRNA + S-adenosyl-L-homocysteine + H(+). Its function is as follows. Specifically methylates the uridine in position 2552 of 23S rRNA at the 2'-O position of the ribose in the fully assembled 50S ribosomal subunit. This Legionella pneumophila (strain Corby) protein is Ribosomal RNA large subunit methyltransferase E.